The following is a 383-amino-acid chain: Fatty acid hydroxylase ahd1 (383 aa).

The next 4 helical transmembrane spans lie at 84-104 (VMGL…NKSW), 123-143 (TVHT…LFAL), 172-192 (LIPV…IIYY), and 214-236 (VAQW…RALH). Residues 217–341 (WLVCLLMEDI…VGLLDAIFKT (125 aa)) enclose the Fatty acid hydroxylase domain. An N-linked (GlcNAc...) asparagine glycan is attached at Asn342.

Belongs to the sterol desaturase family.

It localises to the membrane. It functions in the pathway secondary metabolite biosynthesis. Functionally, fatty acid hydroxylase; part of the gene cluster that mediates the biosynthesis of the glycolipid biosurfactant ustilagic acid (UA). UA is a secreted cellobiose glycolipid that is toxic for many microorganisms and confers biocontrol activity to U.maydis. UA consists of 15,16-dihydroxypalmitic or 2,15,16-trihydroxypalmitic acid, which is O-glycosidically linked to cellobiose at its terminal hydroxyl group. In addition, the cellobiose moiety is acetylated and acylated with a short-chain hydroxy fatty acid. UA biosynthesis starts with omega-hydroxylation of palmitic acid catalyzed by the cytochrome P450 monooxygenase cyp1. Terminal hydroxylation of palmitic acid precedes subterminal hydroxylation catalyzed by the cytochrome P450 monooxygenase cyp2. Sequential glucosylation of the hydroxy fatty acid is probably catalyzed by the glycosyltransferase ugt1. The cellobiose lipid is further decorated by acetylation of the proximal glucose residue and by acylation with a short-chain beta-hydroxy fatty acid at the distal glucose residue. The acyltransferase uat1 may be a good candidate for catalyzing either acetylation or acylation of the cellobiose lipid. The fatty acid synthase fas2 may be involved in synthesis of the carbon backbone of the short-chain beta-hydroxy fatty acid esterified to the cellobiose disaccharide. The secreted UA consists of a mixture of both alpha-hydroxylated and non-hydroxylated glycolipids; therefore, alpha-hydroxylation of the long-chain fatty, catalyzed by the fatty acid hydroxylase ahd1, occurs late in UA biosynthesis and may be the last step before secretion. In Mycosarcoma maydis (Corn smut fungus), this protein is Fatty acid hydroxylase ahd1.